The sequence spans 341 residues: tRNA N6-adenosine threonylcarbamoyltransferase (341 aa).

Positions 119 and 123 each coordinate Fe cation. Substrate is bound by residues 141–145, aspartate 174, glycine 187, and asparagine 279; that span reads MVSGG. Aspartate 307 contacts Fe cation.

It belongs to the KAE1 / TsaD family. It depends on Fe(2+) as a cofactor.

It is found in the cytoplasm. The catalysed reaction is L-threonylcarbamoyladenylate + adenosine(37) in tRNA = N(6)-L-threonylcarbamoyladenosine(37) in tRNA + AMP + H(+). Functionally, required for the formation of a threonylcarbamoyl group on adenosine at position 37 (t(6)A37) in tRNAs that read codons beginning with adenine. Is involved in the transfer of the threonylcarbamoyl moiety of threonylcarbamoyl-AMP (TC-AMP) to the N6 group of A37, together with TsaE and TsaB. TsaD likely plays a direct catalytic role in this reaction. The chain is tRNA N6-adenosine threonylcarbamoyltransferase from Oenococcus oeni (strain ATCC BAA-331 / PSU-1).